The primary structure comprises 319 residues: Putative olfactory receptor 52L2 (319 aa).

At 1–43 the chain is on the extracellular side; it reads MNLDSFFSFLLKSLIMALSNSSWRLPQPSFFLVGIPGLEESQH. N-linked (GlcNAc...) asparagine glycosylation occurs at N20. Residues 44–64 form a helical membrane-spanning segment; that stretch reads WIALPLGILYLLALVGNVTIL. The Cytoplasmic segment spans residues 65–72; the sequence is FIIWMDPS. A helical transmembrane segment spans residues 73-93; it reads LHQSMYLFLSMLAAIDLVVAS. Topologically, residues 94–117 are extracellular; it reads STAPKALAVLLVRAQEIGYTVCLI. A disulfide bridge links C115 with C207. A helical membrane pass occupies residues 118-138; the sequence is QMFFTHAFSSMESGVLVAMAL. Topologically, residues 139-157 are cytoplasmic; sequence DRYVAICHPLHHSTILHPG. The helical transmembrane segment at 158 to 178 threads the bilayer; sequence VIGHIGMVVLVRGLLLLIPFL. Topologically, residues 179-214 are extracellular; the sequence is ILLRKLIFCQATIIGHAYCEHMAVVKLACSETTVNR. A helical transmembrane segment spans residues 215–235; that stretch reads AYGLTVALLVVGLDVLAIGVS. The Cytoplasmic portion of the chain corresponds to 236–255; it reads YAHILQAVLKVPGNEARLKA. The chain crosses the membrane as a helical span at residues 256-276; sequence FSTCGSHVCVILVFYIPGMFS. Residues 277-291 are Extracellular-facing; sequence FLTHRFGHHVPHHVH. A helical transmembrane segment spans residues 292-312; sequence VLLAILYRLVPPALNPLVYRV. Residues 313 to 319 lie on the Cytoplasmic side of the membrane; sequence KTQKIHQ.

The protein belongs to the G-protein coupled receptor 1 family.

The protein resides in the cell membrane. Functionally, odorant receptor. The sequence is that of Putative olfactory receptor 52L2 (OR52L2P) from Homo sapiens (Human).